A 94-amino-acid chain; its full sequence is Mobilization protein C (94 aa).

As to quaternary structure, interacts with MobA and MobB to form the relaxosome.

Functionally, this protein is essential to promote the specific transfer of the plasmid in the presence of conjugative plasmids. The chain is Mobilization protein C (mobC) from Escherichia coli.